A 388-amino-acid polypeptide reads, in one-letter code: Succinate--CoA ligase [ADP-forming] subunit beta (388 aa).

Residues Lys-46, 53 to 55 (GRG), Glu-99, Cys-102, and Glu-107 each bind ATP. Residues Asn-199 and Asp-213 each contribute to the Mg(2+) site. Substrate contacts are provided by residues Asn-264 and 321–323 (GIV).

The protein belongs to the succinate/malate CoA ligase beta subunit family. Heterotetramer of two alpha and two beta subunits. Requires Mg(2+) as cofactor.

The enzyme catalyses succinate + ATP + CoA = succinyl-CoA + ADP + phosphate. The catalysed reaction is GTP + succinate + CoA = succinyl-CoA + GDP + phosphate. It functions in the pathway carbohydrate metabolism; tricarboxylic acid cycle; succinate from succinyl-CoA (ligase route): step 1/1. Its function is as follows. Succinyl-CoA synthetase functions in the citric acid cycle (TCA), coupling the hydrolysis of succinyl-CoA to the synthesis of either ATP or GTP and thus represents the only step of substrate-level phosphorylation in the TCA. The beta subunit provides nucleotide specificity of the enzyme and binds the substrate succinate, while the binding sites for coenzyme A and phosphate are found in the alpha subunit. The polypeptide is Succinate--CoA ligase [ADP-forming] subunit beta (Actinobacillus pleuropneumoniae serotype 5b (strain L20)).